The following is a 273-amino-acid chain: Cyclic di-AMP synthase CdaA (273 aa).

The next 3 membrane-spanning stretches (helical) occupy residues 12-32 (LGNA…IMVI), 40-60 (LLKG…LGLS), and 61-81 (TLQW…IIIF). One can recognise a DAC domain in the interval 82–242 (QPELRRALEQ…NGDLHRELTE (161 aa)).

The protein belongs to the adenylate cyclase family. DacA/CdaA subfamily. In terms of assembly, probably a homodimer. Interacts with CdaR. May interact with GlmM.

It is found in the cell membrane. It carries out the reaction 2 ATP = 3',3'-c-di-AMP + 2 diphosphate. With respect to regulation, DAC activity is stimulated about 20-fold in E.coli by coexpression with CdaR. In terms of biological role, one of 3 paralogous diadenylate cyclases (DAC) in this bacteria, catalyzing the condensation of 2 ATP molecules into cyclic di-AMP (c-di-AMP). Upon expression in E.coli leads to c-di-AMP synthesis. Probably the main producer of c-di-AMP for the cell; is probably implicated in control of peptidoglycan synthesis. In B.subtilis c-di-AMP is a second messenger that mediates growth, DNA repair and cell wall homeostasis; it is toxic when present in excess. This is Cyclic di-AMP synthase CdaA from Bacillus subtilis (strain 168).